Reading from the N-terminus, the 228-residue chain is MSKKAFFITGTDTDAGKTLVATGLLAAARLRGLSTLGLKPVAAGCTRTEQGLRNSDALALQAQSTLPVVYEQVNPVALEAAIAPHIAALQEKRSLSADRLAGFCRSSLRQADFTLVEGAGGWRVPLNPSETLANLAQLLRLPVVLVVGMRLGCINHALLTVEAIRNDGLPLVGWVANVLDADMPVLEENIASLAQRIPAPCLGVVPRLSMASADAASAHLDLTPLLDA.

14–19 (DAGKTL) is an ATP binding site. Thr-18 lines the Mg(2+) pocket. Residue Lys-39 is part of the active site. ATP-binding positions include Asp-56, 117–120 (EGAG), and 206–208 (PRL). Mg(2+) is bound by residues Asp-56 and Glu-117.

It belongs to the dethiobiotin synthetase family. Homodimer. It depends on Mg(2+) as a cofactor.

It localises to the cytoplasm. The catalysed reaction is (7R,8S)-7,8-diammoniononanoate + CO2 + ATP = (4R,5S)-dethiobiotin + ADP + phosphate + 3 H(+). It participates in cofactor biosynthesis; biotin biosynthesis; biotin from 7,8-diaminononanoate: step 1/2. Its function is as follows. Catalyzes a mechanistically unusual reaction, the ATP-dependent insertion of CO2 between the N7 and N8 nitrogen atoms of 7,8-diaminopelargonic acid (DAPA, also called 7,8-diammoniononanoate) to form a ureido ring. This chain is ATP-dependent dethiobiotin synthetase BioD, found in Cellvibrio japonicus (strain Ueda107) (Pseudomonas fluorescens subsp. cellulosa).